Here is a 206-residue protein sequence, read N- to C-terminus: Small ribosomal subunit protein uS4 (206 aa).

The S4 RNA-binding domain maps to 96–156 (CRLDNVVYRM…EKAKNQLRIV (61 aa)).

Belongs to the universal ribosomal protein uS4 family. Part of the 30S ribosomal subunit. Contacts protein S5. The interaction surface between S4 and S5 is involved in control of translational fidelity.

Its function is as follows. One of the primary rRNA binding proteins, it binds directly to 16S rRNA where it nucleates assembly of the body of the 30S subunit. In terms of biological role, with S5 and S12 plays an important role in translational accuracy. The protein is Small ribosomal subunit protein uS4 of Pseudomonas savastanoi pv. phaseolicola (strain 1448A / Race 6) (Pseudomonas syringae pv. phaseolicola (strain 1448A / Race 6)).